A 431-amino-acid polypeptide reads, in one-letter code: Cyclic GMP-AMP synthase-like receptor (431 aa).

Residues Ser-73 and 85-87 contribute to the ATP site; that span reads EFD. Mg(2+) contacts are provided by Glu-85, Asp-87, and Asp-212. Asp-212 is a GTP binding site. Residues Lys-290 and 304-308 contribute to the ATP site; that span reads SYALK. Glu-316 is a Mn(2+) binding site.

It belongs to the mab-21 family. The cofactor is Mg(2+). Mn(2+) serves as cofactor.

It catalyses the reaction GTP + ATP = 2',3'-cGAMP + 2 diphosphate. The catalysed reaction is GTP + ATP = pppGp(2'-5')A + diphosphate. It carries out the reaction pppGp(2'-5')A = 2',3'-cGAMP + diphosphate. Nucleotidyltransferase that catalyzes the formation of cyclic GMP-AMP (2',3'-cGAMP) from ATP and GTP and plays a key role in innate immunity. Acts as a key sensor of double-stranded RNA (dsRNA), the presence of dsRNA in the cytoplasm being a danger signal that triggers the immune responses. Directly binds dsRNA, activating the nucleotidyltransferase activity, leading to synthesis of 2',3'-cGAMP, a second messenger that binds to and activates Sting, thereby triggering the immune response via activation of the NF-kappa-B transcription factor. In Frankliniella occidentalis (Western flower thrips), this protein is Cyclic GMP-AMP synthase-like receptor.